A 216-amino-acid polypeptide reads, in one-letter code: Ras-related protein RABE1c (216 aa).

22–29 (GDSGVGKS) is a GTP binding site. The Effector region motif lies at 44–52 (FITTIGIDF). GTP-binding positions include 70–74 (DTAGQ), 128–131 (NKAD), and 159–160 (SA). Residues Cys-213 and Cys-214 are each lipidated (S-geranylgeranyl cysteine).

Belongs to the small GTPase superfamily. Rab family. In terms of assembly, interacts with PI5K2.

It localises to the golgi apparatus membrane. The protein localises to the cell membrane. In terms of biological role, involved in membrane trafficking from the Golgi to the plasma membrane. This Arabidopsis thaliana (Mouse-ear cress) protein is Ras-related protein RABE1c (RABE1C).